Here is a 129-residue protein sequence, read N- to C-terminus: Glycine cleavage system H protein (129 aa).

The region spanning 23–104 is the Lipoyl-binding domain; it reads TATIGITQHA…AYAAWLFRLK (82 aa). Lys64 bears the N6-lipoyllysine mark.

The protein belongs to the GcvH family. As to quaternary structure, the glycine cleavage system is composed of four proteins: P, T, L and H. The cofactor is (R)-lipoate.

In terms of biological role, the glycine cleavage system catalyzes the degradation of glycine. The H protein shuttles the methylamine group of glycine from the P protein to the T protein. This chain is Glycine cleavage system H protein, found in Nitrosospira multiformis (strain ATCC 25196 / NCIMB 11849 / C 71).